A 385-amino-acid polypeptide reads, in one-letter code: MAIPHASNETSYLLPPNKEDWEGQGIPDFVYEQEELMMEGVQWPRGALSLLNTPPLSHFDSALCSAWRQRMELGLFRYPLGELPTQTLPGTVGFVAQLNVERGVQRRCPQNIKSVRQEFDPEQFNFNQIRPGEVLFRLHRKQDCSGTVQQEDILVVINVSPLEWGHVLLVPEPARGLPQRLLPGALRAGVEAVLLSSHPGFRVGFNSLGGLASVNHLHLHGYYLAHRLPVEGAPSEPLDPRGRLHVLQALPAPGFLFYTSRPGPDLEALISRVCRATDYLTDCEIAHNLFVTRGAPPGKATSSSALSGVRVILWPRKPSFGIKEGEAFNVALCELAGHLPVKTAQDFSSLTEAAALALIRECLLPPAQAEDVRAALVALIAREEE.

The Tele-GMP-histidine intermediate role is filled by histidine 218.

Belongs to the GDPGP1 family.

Its subcellular location is the cytoplasm. It carries out the reaction GDP-alpha-D-glucose + phosphate = alpha-D-glucose 1-phosphate + GDP + H(+). Its function is as follows. Specific and highly efficient GDP-D-glucose phosphorylase regulating the levels of GDP-D-glucose in cells. In Bos taurus (Bovine), this protein is GDP-D-glucose phosphorylase 1 (GDPGP1).